The primary structure comprises 384 residues: F-box/kelch-repeat protein At3g44120 (384 aa).

An F-box domain is found at 1 to 46 (MTLPELPKDLVEEILCFVPATSLKRLRSSCKEWNRLFKDDKRFARK). 3 Kelch repeats span residues 156–202 (CNKS…RECF), 264–314 (SVLV…FLLD), and 352–384 (GVQT…KRDY).

The chain is F-box/kelch-repeat protein At3g44120 from Arabidopsis thaliana (Mouse-ear cress).